A 543-amino-acid polypeptide reads, in one-letter code: Protein male-specific lethal-3 (543 aa).

The Chromo domain occupies 10-90; sequence LFNRGEKVLC…KLQRELAEAA (81 aa). Positions 93-247 are disordered; the sequence is QKTGGYSYKD…THTTDAEKRI (155 aa). Basic and acidic residues-rich tracts occupy residues 180 to 202, 210 to 224, and 234 to 247; these read RSRDGSGNRSRDGSGNRSRDNSS, KSKGGDKNDDGERRS, and SPKDTHTTDAEKRI. One can recognise an MRG domain in the interval 249-542; it reads QEDRVMLRIS…PLIDQGRELS (294 aa).

As to quaternary structure, component of the male-specific lethal (MSL) histone acetyltransferase complex, composed of mof, mle, msl-1, msl-2 and msl-3 proteins, as well as roX1 and roX2 non-coding RNAs. Ubiquitinated by msl-2.

The protein localises to the nucleus. It is found in the chromosome. Component of the male-specific lethal (MSL) histone acetyltransferase complex, a multiprotein complex essential for elevating transcription of the single X chromosome in the male (X chromosome dosage compensation). The MSL complex specifically associates with the single X chromosome in males and mediates formation of H4K16ac, promoting a two-fold activation of X chromosome. Acts as a histone reader that specifically recognizes and binds histone H3 trimethylated at 'Lys-36' (H3K36me3) and histone H4 monomethylated at 'Lys-20' (H4K20me1). Within the MSL complex, mediates the spreading of the MSL complex from initiation sites on the male X chromosome to flanking chromatin. Following initial recruitment of the MSL complex to male X chromosome by msl-2, msl-3 binds H3K36me3 and promotes spreading of the MSL complex in cis. In addition to its role in dosage compensation in males, promotes germline stem cell differentiation in females: recognizes and binds H3K36me3, promoting recruitment of the ATAC complex and transcription of genes, such as RpS19b. The protein is Protein male-specific lethal-3 (msl-3) of Drosophila virilis (Fruit fly).